The sequence spans 307 residues: tRNA dimethylallyltransferase (307 aa).

11-18 is a binding site for ATP; that stretch reads GPTGSGKT. 13–18 is a substrate binding site; it reads TGSGKT. The segment at 36–39 is interaction with substrate tRNA; that stretch reads DSVA.

It belongs to the IPP transferase family. In terms of assembly, monomer. It depends on Mg(2+) as a cofactor.

It catalyses the reaction adenosine(37) in tRNA + dimethylallyl diphosphate = N(6)-dimethylallyladenosine(37) in tRNA + diphosphate. Functionally, catalyzes the transfer of a dimethylallyl group onto the adenine at position 37 in tRNAs that read codons beginning with uridine, leading to the formation of N6-(dimethylallyl)adenosine (i(6)A). This chain is tRNA dimethylallyltransferase, found in Koribacter versatilis (strain Ellin345).